Reading from the N-terminus, the 490-residue chain is MWRETKLLLIDDNLDRSRDLAVILNFLGEDQLTCNSEDWREVAAGLSNSREALCVLLGSVESKGGAVELLKQLASWDEYLPILLIGEPAPADWPEELRRRVLASLEMPPSYNKLLDSLHRAQVYREMYDQARERGRSREPNLFRSLVGTSRAIQQVRQMMQQVADTDASVLILGESGTGKEVVARNLHYHSKRREGPFVPVNCGAIPAELLESELFGHEKGAFTGAITSRAGRFELANGGTLFLDEIGDMPLPMQVKLLRVLQERTFERVGSNKTQNVDVRIIAATHKNLEKMIEDGTFREDLYYRLNVFPIEMAPLRERVEDIALLLNELISRMEHEKRGSIRFNSAAIMSLCRHDWPGNVRELANLVERLAIMHPYGVIGVGELPKKFRHVDDEDEQLASSLREELEERAAINAGLPGMDAPAMLPAEGLDLKDYLANLEQGLIQQALDDAGGVVARAAERLRIRRTTLVEKMRKYGMSRRDDDLSDD.

Position 142 (Leu142) interacts with 3',3'-c-di-GMP. ADP is bound by residues Val147 and 177–182 (GTGKEV). Residues 186–189 (NLHY) and 330–341 (ELISRMEHEKRG) each bind 3',3'-c-di-GMP. 2 residues coordinate ADP: Arg334 and Arg363.

In terms of assembly, forms homodimers. Forms homohexamers that inhibit transcription initiation. Interacts with FleN; this complex is formed in the presence as well as in the absence of c-di-GMP or ATP.

With respect to regulation, C-di-GMP interaction leads to active site obstruction, hexameric ring destabilization thus relieving DNA bending and activating gene transcription. Functionally, AAA+ ATPase enhancer-binding protein that acts as a transcription regulator and plays a role in the modulation of mucin adhesion and flagellar gene expression. In addition to flagella genes, also regulates expression of biofilm-related genes. Functions as a transcriptional repressor in the absence of c-di-GMP and as an activator when c-di-GMP is present. This Pseudomonas aeruginosa (strain ATCC 15692 / DSM 22644 / CIP 104116 / JCM 14847 / LMG 12228 / 1C / PRS 101 / PAO1) protein is Transcriptional regulator FleQ.